Here is a 232-residue protein sequence, read N- to C-terminus: Orotidine 5'-phosphate decarboxylase (232 aa).

Substrate is bound by residues Asp-13, Lys-35, 62–71, Thr-121, Arg-182, Gln-191, Gly-211, and Arg-212; that span reads DLKFHDIPNT. Catalysis depends on Lys-64, which acts as the Proton donor.

This sequence belongs to the OMP decarboxylase family. Type 1 subfamily. In terms of assembly, homodimer.

The enzyme catalyses orotidine 5'-phosphate + H(+) = UMP + CO2. The protein operates within pyrimidine metabolism; UMP biosynthesis via de novo pathway; UMP from orotate: step 2/2. Functionally, catalyzes the decarboxylation of orotidine 5'-monophosphate (OMP) to uridine 5'-monophosphate (UMP). The sequence is that of Orotidine 5'-phosphate decarboxylase from Acinetobacter baumannii (strain ACICU).